Here is a 228-residue protein sequence, read N- to C-terminus: Orotate phosphoribosyltransferase (228 aa).

5-phospho-alpha-D-ribose 1-diphosphate is bound by residues Arg-107, Lys-108, Lys-111, and 133-141 (EDLTTDGGS). Thr-137 serves as a coordination point for orotate.

This sequence belongs to the purine/pyrimidine phosphoribosyltransferase family. PyrE subfamily. As to quaternary structure, homodimer. Requires Mg(2+) as cofactor.

The catalysed reaction is orotidine 5'-phosphate + diphosphate = orotate + 5-phospho-alpha-D-ribose 1-diphosphate. The protein operates within pyrimidine metabolism; UMP biosynthesis via de novo pathway; UMP from orotate: step 1/2. In terms of biological role, catalyzes the transfer of a ribosyl phosphate group from 5-phosphoribose 1-diphosphate to orotate, leading to the formation of orotidine monophosphate (OMP). This Jannaschia sp. (strain CCS1) protein is Orotate phosphoribosyltransferase.